The primary structure comprises 65 residues: Prokaryotic ubiquitin-like protein UBact (65 aa).

Residues M1–M17 are compositionally biased toward polar residues. The disordered stretch occupies residues M1–E65. Residues K35 to E65 show a composition bias toward basic and acidic residues. Residue E65 forms an Isoglutamyl lysine isopeptide (Glu-Lys) (interchain with K-? in acceptor proteins) linkage.

This sequence belongs to the ubiquitin-like protein UBact family.

May function as a protein modifier covalently attached to lysine residues of substrate proteins. This may serve to target the modified proteins for degradation by proteasomes. In Methylacidiphilum infernorum (isolate V4) (Methylokorus infernorum (strain V4)), this protein is Prokaryotic ubiquitin-like protein UBact.